Reading from the N-terminus, the 123-residue chain is Ribonuclease P protein component (123 aa).

It belongs to the RnpA family. As to quaternary structure, consists of a catalytic RNA component (M1 or rnpB) and a protein subunit.

It catalyses the reaction Endonucleolytic cleavage of RNA, removing 5'-extranucleotides from tRNA precursor.. RNaseP catalyzes the removal of the 5'-leader sequence from pre-tRNA to produce the mature 5'-terminus. It can also cleave other RNA substrates such as 4.5S RNA. The protein component plays an auxiliary but essential role in vivo by binding to the 5'-leader sequence and broadening the substrate specificity of the ribozyme. This chain is Ribonuclease P protein component, found in Bordetella petrii (strain ATCC BAA-461 / DSM 12804 / CCUG 43448).